Here is a 560-residue protein sequence, read N- to C-terminus: Chaperonin GroEL 2 (560 aa).

ATP is bound by residues 29–32 (TLGP), Lys50, 86–90 (DGTTT), Gly414, and Asp494. The interval 524-546 (EDEDDDDGGGGGGGGMPAGGAGG) is disordered. The segment covering 532 to 546 (GGGGGGGMPAGGAGG) has biased composition (gly residues).

The protein belongs to the chaperonin (HSP60) family. As to quaternary structure, forms a cylinder of 14 subunits composed of two heptameric rings stacked back-to-back. Interacts with the co-chaperonin GroES.

Its subcellular location is the cytoplasm. It catalyses the reaction ATP + H2O + a folded polypeptide = ADP + phosphate + an unfolded polypeptide.. In terms of biological role, together with its co-chaperonin GroES, plays an essential role in assisting protein folding. The GroEL-GroES system forms a nano-cage that allows encapsulation of the non-native substrate proteins and provides a physical environment optimized to promote and accelerate protein folding. This is Chaperonin GroEL 2 from Salinibacter ruber (strain DSM 13855 / M31).